The sequence spans 572 residues: Hsp70-Hsp90 organizing protein 1 (572 aa).

TPR repeat units lie at residues 2–35 (AEEAKAKGNAAFSSGDFTTAINHFTEAIALAPTN), 37–69 (VLFSNRSAAHASLHQYAEALSDAKETIKLKPYW), and 70–103 (PKGYSRLGAAHLGLNQFELAVTAYKKGLDVDPTN). Positions 133–172 (GPEMWTKLTSDPSTRGFLQQPDFVNMMQEIQKNPSSLNLY) constitute an STI1 1 domain. Position 167 is a phosphoserine (S167). Residues 189–248 (KFRPPPPQGDEAEVPESDMGQSSSNEPEVEKKREPEPEPEPEVTEEKEKKERKEKAKKEK) are disordered. Positions 232 to 248 (TEEKEKKERKEKAKKEK) are enriched in basic and acidic residues. The Bipartite nuclear localization signal signature appears at 241–258 (KEKAKKEKELGNAAYKKK). TPR repeat units lie at residues 244–277 (AKKEKELGNAAYKKKDFETAIQHYSTAIEIDDED), 279–311 (SYLTNRAAVYLEMGKYNECIEDCNKAVERGREL), 319–356 (ARALTRKGTALTKMAKCSKDYEPAIEAFQKALTEHRNP), 358–382 (TLKRLNDAERAKKEWEQKQYFDPKL), 383–416 (GDEEREKGNDFFKEQKYPEAIKHYTEAIKRNPND), 418–450 (KAYSNRAASYTKLGAMPEGLKDAEKCIELDPTF), and 451–484 (SKGYSRKAAVQFFLKEYDNAMETYQAGLEHDPSN). One can recognise an STI1 2 domain in the interval 521–560 (DPEIQNILTDPVMRQVLSDLQENPSAAQKHMQNPMVMNKI).

As to quaternary structure, co-chaperone that forms a complex with HSP70 and HSP90 and preproteins (e.g. chloroplast preproteins). Phosphorylated. In terms of processing, acetylated.

It is found in the cytoplasm. Its subcellular location is the nucleus. In terms of biological role, mediates the association of the molecular chaperones HSP70 and HSP90. Mediates nuclear encoded chloroplast preproteins binding to HSP90 prior to chloroplastic sorting. This chain is Hsp70-Hsp90 organizing protein 1 (HOP1), found in Arabidopsis thaliana (Mouse-ear cress).